The primary structure comprises 469 residues: Lactonohydrolase oryH (469 aa).

The first 20 residues, methionine 1–alanine 20, serve as a signal peptide directing secretion.

This sequence belongs to the SMP-30/CGR1 family.

It functions in the pathway secondary metabolite biosynthesis. Functionally, lactonohydrolase; part of the gene cluster that mediates the biosynthesis of oryzines, natural products with an unusual maleidride backbone. The two subunits of the fungal fatty acid synthase oryfasA and oryfasB probably form octenoic acid. This fatty acid is most likely activated by the acyl-CoA ligase oryP to give octenyl-CoA before the citrate synthase-like protein oryE catalyzes condensation with oxaloacetate to form tricarboxylic acid. The next steps of the pathways are conjectural, but a favorite possible route has been proposed, beginning with decarboxylation and concomitant dehydration by the decarboxylase oryM, followed by tautomerization, which may lead to the production of a diene intermediate. Reduction of this diene intermediate could give the known metabolite piliformic acid. On the pathway to oryzine B and oryzine A, however, hydroxylation of the diene by the alpha-ketoglutarate-dependent dioxygenase oryG and lactonisation by the lactonohydrolases oryH or oryL could give oryzine B directly. Finally, enoyl reduction by the dehydrogenase oryD would then convert oryzine B into oryzine A. The protein is Lactonohydrolase oryH of Aspergillus oryzae (strain ATCC 42149 / RIB 40) (Yellow koji mold).